The primary structure comprises 345 residues: Annexin A9 (345 aa).

Annexin repeat units follow at residues 41-112, 113-184, 197-266, and 270-341; these read FSVD…ALLQ, PTAQ…ALAK, NLAE…GLAS, and NTPL…ALCR.

It belongs to the annexin family. In terms of assembly, homodimer. As to expression, expressed in the stratified squamous skin epithelium, but not in epithelia of other types (at protein level).

Low affinity receptor for acetylcholine known to be targeted by disease-causing pemphigus vulgaris antibodies in keratinocytes. This chain is Annexin A9 (ANXA9), found in Homo sapiens (Human).